The following is a 451-amino-acid chain: POU domain, class 3, transcription factor 1 (451 aa).

5 disordered regions span residues 1–21, 69–114, 127–154, 186–253, and 395–451; these read MATT…GTGP, AHPQ…GFHA, AWAQ…HQPQ, GLHH…PSSD, and KRMT…GSVQ. Composition is skewed to gly residues over residues 11–20, 76–85, and 95–112; these read GPGGGAGGTG, TGGGGGGDWA, and AGGG…GGGF. Positions 190–199 are enriched in basic and acidic residues; it reads ALHEDGHEAQ. The span at 220-232 shows a compositional bias: low complexity; that stretch reads AGGLHAAAAHLHP. The POU-specific domain occupies 247–321; sequence EDAPSSDDLE…LLNKWLEETD (75 aa). Residues 339–398 constitute a DNA-binding region (homeobox); sequence KRKKRTSIEVGVKGALESHFLKCPKPSAHEITGLADSLQLEKEVVRVWFCNRRQKEKRMT. The segment covering 427–436 has biased composition (pro residues); the sequence is PSAPPPPPPA.

Belongs to the POU transcription factor family. Class-3 subfamily. In terms of tissue distribution, expressed in embryonal stem cells and in the developing brain.

Its subcellular location is the nucleus. Functionally, transcription factor that binds to the octamer motif (5'-ATTTGCAT-3'). Acts as a transcriptional activator when binding cooperatively with SOX4, SOX11, or SOX12 to gene promoters. Acts as a transcriptional repressor of myelin-specific genes. This Homo sapiens (Human) protein is POU domain, class 3, transcription factor 1 (POU3F1).